We begin with the raw amino-acid sequence, 288 residues long: Quinate/shikimate dehydrogenase (288 aa).

K71 and D107 together coordinate substrate. NAD(+) is bound by residues 132–135, 155–158, K205, 232–235, and G255; these read AGGA, NRRD, and CVYN.

Belongs to the shikimate dehydrogenase family. Homodimer.

The catalysed reaction is L-quinate + NAD(+) = 3-dehydroquinate + NADH + H(+). It catalyses the reaction L-quinate + NADP(+) = 3-dehydroquinate + NADPH + H(+). It carries out the reaction shikimate + NADP(+) = 3-dehydroshikimate + NADPH + H(+). The enzyme catalyses shikimate + NAD(+) = 3-dehydroshikimate + NADH + H(+). The protein operates within metabolic intermediate biosynthesis; chorismate biosynthesis; chorismate from D-erythrose 4-phosphate and phosphoenolpyruvate: step 4/7. Its function is as follows. The actual biological function of YdiB remains unclear, nor is it known whether 3-dehydroshikimate or quinate represents the natural substrate. Catalyzes the reversible NAD-dependent reduction of both 3-dehydroshikimate (DHSA) and 3-dehydroquinate to yield shikimate (SA) and quinate, respectively. It can use both NAD or NADP for catalysis, however it has higher catalytic efficiency with NAD. The chain is Quinate/shikimate dehydrogenase from Escherichia coli O1:K1 / APEC.